The chain runs to 129 residues: Small ribosomal subunit protein uS11 (129 aa).

It belongs to the universal ribosomal protein uS11 family. Part of the 30S ribosomal subunit. Interacts with proteins S7 and S18. Binds to IF-3.

Located on the platform of the 30S subunit, it bridges several disparate RNA helices of the 16S rRNA. Forms part of the Shine-Dalgarno cleft in the 70S ribosome. This chain is Small ribosomal subunit protein uS11, found in Vibrio atlanticus (strain LGP32) (Vibrio splendidus (strain Mel32)).